The following is a 488-amino-acid chain: Glutamate--tRNA ligase (488 aa).

The short motif at 12–22 (PSPTGYMHVGN) is the 'HIGH' region element. Zn(2+) contacts are provided by Cys109, Cys111, Cys136, and His138. The 'KMSKS' region motif lies at 253-257 (KLSKR). ATP is bound at residue Lys256.

The protein belongs to the class-I aminoacyl-tRNA synthetase family. Glutamate--tRNA ligase type 1 subfamily. Monomer. Zn(2+) is required as a cofactor.

It localises to the cytoplasm. It catalyses the reaction tRNA(Glu) + L-glutamate + ATP = L-glutamyl-tRNA(Glu) + AMP + diphosphate. Its function is as follows. Catalyzes the attachment of glutamate to tRNA(Glu) in a two-step reaction: glutamate is first activated by ATP to form Glu-AMP and then transferred to the acceptor end of tRNA(Glu). This is Glutamate--tRNA ligase from Clostridium tetani (strain Massachusetts / E88).